The chain runs to 487 residues: Glutamyl-tRNA(Gln) amidotransferase subunit A (487 aa).

Residues Lys80 and Ser155 each act as charge relay system in the active site. The active-site Acyl-ester intermediate is Ser179.

The protein belongs to the amidase family. GatA subfamily. In terms of assembly, heterotrimer of A, B and C subunits.

The catalysed reaction is L-glutamyl-tRNA(Gln) + L-glutamine + ATP + H2O = L-glutaminyl-tRNA(Gln) + L-glutamate + ADP + phosphate + H(+). In terms of biological role, allows the formation of correctly charged Gln-tRNA(Gln) through the transamidation of misacylated Glu-tRNA(Gln) in organisms which lack glutaminyl-tRNA synthetase. The reaction takes place in the presence of glutamine and ATP through an activated gamma-phospho-Glu-tRNA(Gln). This is Glutamyl-tRNA(Gln) amidotransferase subunit A from Chloroflexus aurantiacus (strain ATCC 29366 / DSM 635 / J-10-fl).